Consider the following 412-residue polypeptide: Peptidase T (412 aa).

Residue His81 participates in Zn(2+) binding. The active site involves Asp83. Asp144 serves as a coordination point for Zn(2+). Glu178 acts as the Proton acceptor in catalysis. 3 residues coordinate Zn(2+): Glu179, Asp201, and His383.

Belongs to the peptidase M20B family. Zn(2+) serves as cofactor.

The protein localises to the cytoplasm. The catalysed reaction is Release of the N-terminal residue from a tripeptide.. Cleaves the N-terminal amino acid of tripeptides. This is Peptidase T from Bacillus cereus (strain ZK / E33L).